The following is a 1110-amino-acid chain: Retinal guanylyl cyclase 1 (1110 aa).

A signal peptide spans 1–56; it reads MTACTFLAGGLRDPGLCGPTRWAPSPPGLPPIPPRPRLRLRPPLLLLLLLPRSVLS. At 57–467 the chain is on the extracellular side; it reads AVFTVGVLGP…PDTICNGGVE (411 aa). Residue N302 is glycosylated (N-linked (GlcNAc...) asparagine). Residues 468-492 form a helical membrane-spanning segment; it reads PSVVFIGFLLVVGMGLAGAFLAHYC. The Protein kinase domain maps to 493-813; it reads RHRLLHIQMV…DRTFELFKSI (321 aa). At 493–1110 the chain is on the cytoplasmic side; it reads RHRLLHIQMV…KARPGQFSGK (618 aa). The 131-residue stretch at 885-1015 folds into the Guanylate cyclase domain; the sequence is TLYFSDIVGF…DTVNTASAME (131 aa). A disordered region spans residues 1070-1110; sequence PIPKPPDLQPGASNHGISLHEIPPDRRQKLEKARPGQFSGK. Positions 1091–1103 are enriched in basic and acidic residues; it reads IPPDRRQKLEKAR.

It belongs to the adenylyl cyclase class-4/guanylyl cyclase family. As to quaternary structure, homodimer; requires homodimerization for guanylyl cyclase activity. Interacts (via C-terminus) with RD3 (via C-terminus); promotes the exit of GUCY2D from the endoplasmic reticulum and its trafficking to the photoreceptor outer segments. Interaction with RD3 negatively regulates GUCY2D guanylate cyclase activity. Expressed in the retina in rod outer segment.

Its subcellular location is the photoreceptor outer segment membrane. It is found in the endoplasmic reticulum membrane. The catalysed reaction is GTP = 3',5'-cyclic GMP + diphosphate. With respect to regulation, activated by GUCA1A when free calcium ions concentration is low, and inhibited by GUCA1A when free calcium ions concentration is high. Negatively regulated by RD3; inhibits the basal and GUCA1A-stimulated guanylate cyclase activity. Its function is as follows. Catalyzes the synthesis of cyclic GMP (cGMP) in rods and cones of photoreceptors. Plays an essential role in phototransduction, by mediating cGMP replenishment. May also participate in the trafficking of membrane-asociated proteins to the photoreceptor outer segment membrane. This chain is Retinal guanylyl cyclase 1 (GUCY2D), found in Bos taurus (Bovine).